The chain runs to 270 residues: tRNA pseudouridine synthase A (270 aa).

The active-site Nucleophile is the aspartate 51. Tyrosine 109 lines the substrate pocket.

This sequence belongs to the tRNA pseudouridine synthase TruA family. In terms of assembly, homodimer.

The enzyme catalyses uridine(38/39/40) in tRNA = pseudouridine(38/39/40) in tRNA. In terms of biological role, formation of pseudouridine at positions 38, 39 and 40 in the anticodon stem and loop of transfer RNAs. The protein is tRNA pseudouridine synthase A of Variovorax paradoxus (strain S110).